The following is an 86-amino-acid chain: Small ribosomal subunit protein bS20 (86 aa).

Over residues 1–27 (MANSKSAKKRAIQAEKRRQHNASRRSM) the composition is skewed to basic residues. The disordered stretch occupies residues 1–28 (MANSKSAKKRAIQAEKRRQHNASRRSMM).

It belongs to the bacterial ribosomal protein bS20 family.

Functionally, binds directly to 16S ribosomal RNA. In Vibrio parahaemolyticus serotype O3:K6 (strain RIMD 2210633), this protein is Small ribosomal subunit protein bS20.